The sequence spans 310 residues: uncharacterized protein (310 aa).

The Cytoplasmic segment spans residues 1-6 (MISEKA). The 65-residue stretch at 5–69 (KAATALATIA…SKGNVILQVQ (65 aa)) folds into the PQ-loop 1 domain. Residues 7 to 27 (ATALATIATVCWCVQLIPQII) traverse the membrane as a helical segment. Residues 28–36 (YNWKKKDCT) lie on the Extracellular side of the membrane. A helical transmembrane segment spans residues 37–57 (GLPPLMMFLWVVSGIPFAIYF). Topologically, residues 58 to 61 (CVSK) are cytoplasmic. A helical membrane pass occupies residues 62–82 (GNVILQVQPHLFMFFCSISFV). Topologically, residues 83-96 (QSCYYPPISMARSK) are extracellular. Residues 97–117 (IVMIVAAIIAADVGMEVGFIL) form a helical membrane-spanning segment. At 118 to 131 (WLRPLYEKGVKWPD) the chain is on the cytoplasmic side. The helical transmembrane segment at 132–152 (LIFGISASVLLAVGLLPPYFE) threads the bilayer. Positions 138 to 194 (ASVLLAVGLLPPYFELAKRKGRVIGINFAFLFIDSLGAWLSIISVILGNMDIMGIIL) constitute a PQ-loop 2 domain. Over 153–164 (LAKRKGRVIGIN) the chain is Extracellular. A helical membrane pass occupies residues 165-185 (FAFLFIDSLGAWLSIISVILG). The Cytoplasmic portion of the chain corresponds to 186-191 (NMDIMG). A helical transmembrane segment spans residues 192-212 (IILYSIVAGMELGIFASHFIW). The Extracellular segment spans residues 213–310 (WCRFRFLAKG…DPDRYSRLSV (98 aa)). Ser229 carries the phosphoserine modification. Residues Asn251 and Asn259 are each glycosylated (N-linked (GlcNAc...) asparagine).

Its subcellular location is the cell membrane. This is an uncharacterized protein from Saccharomyces cerevisiae (strain ATCC 204508 / S288c) (Baker's yeast).